The primary structure comprises 358 residues: Carbamoyl phosphate synthase small chain (358 aa).

2 CPSase regions span residues 1–168 (MYNR…PALG) and 1–171 (MYNR…GRGR). Residues serine 46, glycine 220, and glycine 222 each contribute to the L-glutamine site. Residues 172 to 358 (RVVLVDLGMK…FIKNIDNNMK (187 aa)) enclose the Glutamine amidotransferase type-1 domain. Cysteine 247 (nucleophile) is an active-site residue. L-glutamine-binding residues include methionine 248, glutamine 251, asparagine 289, glycine 291, and tyrosine 292. Catalysis depends on residues histidine 332 and glutamate 334.

Belongs to the CarA family. Composed of two chains; the small (or glutamine) chain promotes the hydrolysis of glutamine to ammonia, which is used by the large (or ammonia) chain to synthesize carbamoyl phosphate. Tetramer of heterodimers (alpha,beta)4.

It carries out the reaction hydrogencarbonate + L-glutamine + 2 ATP + H2O = carbamoyl phosphate + L-glutamate + 2 ADP + phosphate + 2 H(+). The catalysed reaction is L-glutamine + H2O = L-glutamate + NH4(+). Its pathway is amino-acid biosynthesis; L-arginine biosynthesis; carbamoyl phosphate from bicarbonate: step 1/1. The protein operates within pyrimidine metabolism; UMP biosynthesis via de novo pathway; (S)-dihydroorotate from bicarbonate: step 1/3. Small subunit of the glutamine-dependent carbamoyl phosphate synthetase (CPSase). CPSase catalyzes the formation of carbamoyl phosphate from the ammonia moiety of glutamine, carbonate, and phosphate donated by ATP, constituting the first step of 2 biosynthetic pathways, one leading to arginine and/or urea and the other to pyrimidine nucleotides. The small subunit (glutamine amidotransferase) binds and cleaves glutamine to supply the large subunit with the substrate ammonia. The polypeptide is Carbamoyl phosphate synthase small chain (Fusobacterium nucleatum subsp. nucleatum (strain ATCC 25586 / DSM 15643 / BCRC 10681 / CIP 101130 / JCM 8532 / KCTC 2640 / LMG 13131 / VPI 4355)).